The chain runs to 288 residues: ATP synthase gamma chain (288 aa).

Belongs to the ATPase gamma chain family. F-type ATPases have 2 components, CF(1) - the catalytic core - and CF(0) - the membrane proton channel. CF(1) has five subunits: alpha(3), beta(3), gamma(1), delta(1), epsilon(1). CF(0) has three main subunits: a, b and c.

It localises to the cell inner membrane. In terms of biological role, produces ATP from ADP in the presence of a proton gradient across the membrane. The gamma chain is believed to be important in regulating ATPase activity and the flow of protons through the CF(0) complex. The protein is ATP synthase gamma chain of Polaromonas sp. (strain JS666 / ATCC BAA-500).